Reading from the N-terminus, the 489-residue chain is Alpha-amylase (489 aa).

The first 16 residues, 1–16 (HFKPILVLCLATLALG), serve as a signal peptide directing secretion. An intrachain disulfide couples Cys-44 to Cys-102. Ca(2+) is bound by residues Asn-116, Arg-164, and Asp-173. A disulfide bond links Cys-152 and Cys-166. Arg-201 serves as a coordination point for chloride. Asp-203 serves as the catalytic Nucleophile. Position 207 (His-207) interacts with Ca(2+). Glu-240 functions as the Proton donor in the catalytic mechanism. Chloride is bound by residues Asn-303 and Arg-339. 2 disulfides stabilise this stretch: Cys-372–Cys-378 and Cys-443–Cys-455.

This sequence belongs to the glycosyl hydrolase 13 family. Monomer. Requires Ca(2+) as cofactor. It depends on chloride as a cofactor.

It catalyses the reaction Endohydrolysis of (1-&gt;4)-alpha-D-glucosidic linkages in polysaccharides containing three or more (1-&gt;4)-alpha-linked D-glucose units.. The chain is Alpha-amylase from Tribolium castaneum (Red flour beetle).